The sequence spans 333 residues: MDLINSTDYLINASTLVRNSTQFLAPASKMIIALSLYISSIIGTITNGLYLWVLRFKMKQTVNTLLFFHLILSYFISTMILPFMATSQLQDNHWNFGTALCKVFNGTLSLGMFTSVFFLSAIGLDRYLLTLHPVWSQQHRTPRWASSIVLGVWISAAALSIPYLIFRQTHHDRKGKVTCQNNYAVSTNWESKEMQALRQWIHVACFISRFLLGFLLPFFIIIFCYERVASKVKERSLFKSSKPFKVMMTAIISFFVCWMPYHIHQGLLLTTNQSLLLELTLILTVLTTSFNTIFSPTLYLFVGENFKKVFKKSILALFESTFSEDSSVERTQT.

Residues 1 to 30 (MDLINSTDYLINASTLVRNSTQFLAPASKM) are Extracellular-facing. Asn-5, Asn-12, and Asn-19 each carry an N-linked (GlcNAc...) asparagine glycan. A helical transmembrane segment spans residues 31-53 (IIALSLYISSIIGTITNGLYLWV). Topologically, residues 54–64 (LRFKMKQTVNT) are cytoplasmic. A helical transmembrane segment spans residues 65–86 (LLFFHLILSYFISTMILPFMAT). The Extracellular segment spans residues 87-103 (SQLQDNHWNFGTALCKV). Cys-101 and Cys-179 form a disulfide bridge. A helical membrane pass occupies residues 104 to 124 (FNGTLSLGMFTSVFFLSAIGL). At 125-143 (DRYLLTLHPVWSQQHRTPR) the chain is on the cytoplasmic side. A helical membrane pass occupies residues 144 to 165 (WASSIVLGVWISAAALSIPYLI). Over 166-209 (FRQTHHDRKGKVTCQNNYAVSTNWESKEMQALRQWIHVACFISR) the chain is Extracellular. A helical transmembrane segment spans residues 210 to 230 (FLLGFLLPFFIIIFCYERVAS). The Cytoplasmic segment spans residues 231 to 246 (KVKERSLFKSSKPFKV). Residues 247–268 (MMTAIISFFVCWMPYHIHQGLL) traverse the membrane as a helical segment. Residues 269–283 (LTTNQSLLLELTLIL) are Extracellular-facing. Asn-272 carries N-linked (GlcNAc...) asparagine glycosylation. The helical transmembrane segment at 284-303 (TVLTTSFNTIFSPTLYLFVG) threads the bilayer. Residues 304-333 (ENFKKVFKKSILALFESTFSEDSSVERTQT) are Cytoplasmic-facing.

Belongs to the G-protein coupled receptor 1 family.

It is found in the cell membrane. Functionally, orphan receptor; could be a chemoattractant receptor. In Pan troglodytes (Chimpanzee), this protein is Probable G-protein coupled receptor 33 (GPR33).